The chain runs to 179 residues: Large ribosomal subunit protein uL5 (179 aa).

The protein belongs to the universal ribosomal protein uL5 family. Part of the 50S ribosomal subunit; part of the 5S rRNA/L5/L18/L25 subcomplex. Contacts the 5S rRNA and the P site tRNA. Forms a bridge to the 30S subunit in the 70S ribosome.

This is one of the proteins that bind and probably mediate the attachment of the 5S RNA into the large ribosomal subunit, where it forms part of the central protuberance. In the 70S ribosome it contacts protein S13 of the 30S subunit (bridge B1b), connecting the 2 subunits; this bridge is implicated in subunit movement. Contacts the P site tRNA; the 5S rRNA and some of its associated proteins might help stabilize positioning of ribosome-bound tRNAs. This chain is Large ribosomal subunit protein uL5, found in Shewanella putrefaciens (strain CN-32 / ATCC BAA-453).